The sequence spans 136 residues: Large ribosomal subunit protein uL16 (136 aa).

Belongs to the universal ribosomal protein uL16 family. In terms of assembly, part of the 50S ribosomal subunit.

In terms of biological role, binds 23S rRNA and is also seen to make contacts with the A and possibly P site tRNAs. The protein is Large ribosomal subunit protein uL16 of Yersinia enterocolitica serotype O:8 / biotype 1B (strain NCTC 13174 / 8081).